The chain runs to 466 residues: Ribulose bisphosphate carboxylase large chain (466 aa).

Position 5 is an N6,N6,N6-trimethyllysine (K5). Positions 114 and 164 each coordinate substrate. Residue K166 is the Proton acceptor of the active site. K168 provides a ligand contact to substrate. Mg(2+) is bound by residues K192, D194, and E195. At K192 the chain carries N6-carboxylysine. The active-site Proton acceptor is the H285. Substrate contacts are provided by R286, H318, and S370.

Belongs to the RuBisCO large chain family. Type I subfamily. In terms of assembly, heterohexadecamer of 8 large chains and 8 small chains; disulfide-linked. The disulfide link is formed within the large subunit homodimers. Requires Mg(2+) as cofactor. The disulfide bond which can form in the large chain dimeric partners within the hexadecamer appears to be associated with oxidative stress and protein turnover.

The protein localises to the plastid. The protein resides in the chloroplast. The catalysed reaction is 2 (2R)-3-phosphoglycerate + 2 H(+) = D-ribulose 1,5-bisphosphate + CO2 + H2O. It catalyses the reaction D-ribulose 1,5-bisphosphate + O2 = 2-phosphoglycolate + (2R)-3-phosphoglycerate + 2 H(+). In terms of biological role, ruBisCO catalyzes two reactions: the carboxylation of D-ribulose 1,5-bisphosphate, the primary event in carbon dioxide fixation, as well as the oxidative fragmentation of the pentose substrate in the photorespiration process. Both reactions occur simultaneously and in competition at the same active site. The sequence is that of Ribulose bisphosphate carboxylase large chain from Vitis aestivalis (Grape).